The primary structure comprises 184 residues: Inorganic pyrophosphatase (184 aa).

K19, R33, and Y45 together coordinate substrate. Mg(2+) is bound by residues D55, D60, and D92. Residue Y129 participates in substrate binding.

Belongs to the PPase family. As to quaternary structure, homohexamer. Mg(2+) serves as cofactor.

The protein localises to the cytoplasm. It carries out the reaction diphosphate + H2O = 2 phosphate + H(+). In terms of biological role, catalyzes the hydrolysis of inorganic pyrophosphate (PPi) forming two phosphate ions. This chain is Inorganic pyrophosphatase, found in Mycoplasma pneumoniae (strain ATCC 29342 / M129 / Subtype 1) (Mycoplasmoides pneumoniae).